We begin with the raw amino-acid sequence, 209 residues long: Cilia- and flagella-associated protein 418 (209 aa).

Residues 1–76 (MAKDLDELLD…LINEIFEEPD (76 aa)) are required for interaction with FAM161A. Residues 24 to 58 (LDLGERPKGDGGGGSHSGDRNGAQEKETLRSTETF) form a disordered region. Positions 40–58 (SGDRNGAQEKETLRSTETF) are enriched in basic and acidic residues.

As to quaternary structure, interacts (via N-terminus) with FAM161A (via central region); the interaction is direct. Expressed in multiple tissues, including the brain, kidney, lung, spleen, heart, trachea and testis. Expressed in the retina (at protein level).

Its subcellular location is the cytoplasm. It localises to the photoreceptor inner segment. May be involved in photoreceptor outer segment disk morphogenesis. This Mus musculus (Mouse) protein is Cilia- and flagella-associated protein 418.